The following is a 240-amino-acid chain: LexA repressor (240 aa).

The H-T-H motif DNA-binding region spans 26 to 46; that stretch reads FDEMKEALDLASKSGIHRLIT. Catalysis depends on for autocatalytic cleavage activity residues Ser161 and Lys199.

The protein belongs to the peptidase S24 family. As to quaternary structure, homodimer.

The enzyme catalyses Hydrolysis of Ala-|-Gly bond in repressor LexA.. Functionally, represses a number of genes involved in the response to DNA damage (SOS response), including recA and lexA. In the presence of single-stranded DNA, RecA interacts with LexA causing an autocatalytic cleavage which disrupts the DNA-binding part of LexA, leading to derepression of the SOS regulon and eventually DNA repair. In Brucella melitensis biotype 1 (strain ATCC 23456 / CCUG 17765 / NCTC 10094 / 16M), this protein is LexA repressor.